Reading from the N-terminus, the 277-residue chain is Large ribosomal subunit protein uL2c (277 aa).

Residues 223-277 form a disordered region; sequence VVMNPIDHPHGGGEGRAPIGRKKPLTPWGHPALGKRSRKNNKYSDTLILRRRKNS.

This sequence belongs to the universal ribosomal protein uL2 family. In terms of assembly, part of the 50S ribosomal subunit.

The protein localises to the plastid. Its subcellular location is the chloroplast. This Marchantia polymorpha (Common liverwort) protein is Large ribosomal subunit protein uL2c (rpl2).